Consider the following 71-residue polypeptide: Small ribosomal subunit protein bS18 (71 aa).

This sequence belongs to the bacterial ribosomal protein bS18 family. Part of the 30S ribosomal subunit. Forms a tight heterodimer with protein bS6.

Functionally, binds as a heterodimer with protein bS6 to the central domain of the 16S rRNA, where it helps stabilize the platform of the 30S subunit. This Nostoc punctiforme (strain ATCC 29133 / PCC 73102) protein is Small ribosomal subunit protein bS18.